The following is a 256-amino-acid chain: Ribonuclease 3 (256 aa).

In terms of domain architecture, RNase III spans 6-128; it reads LATLETRLDH…LFGAVFLDAG (123 aa). Glu-41 serves as a coordination point for Mg(2+). The active site involves Asp-45. Residues Asp-114 and Glu-117 each coordinate Mg(2+). Residue Glu-117 is part of the active site. In terms of domain architecture, DRBM spans 155–225; sequence DAKTLLQEFL…AKVALEAAQA (71 aa).

The protein belongs to the ribonuclease III family. Homodimer. Requires Mg(2+) as cofactor.

It is found in the cytoplasm. The catalysed reaction is Endonucleolytic cleavage to 5'-phosphomonoester.. Its function is as follows. Digests double-stranded RNA. Involved in the processing of primary rRNA transcript to yield the immediate precursors to the large and small rRNAs (23S and 16S). Processes some mRNAs, and tRNAs when they are encoded in the rRNA operon. Processes pre-crRNA and tracrRNA of type II CRISPR loci if present in the organism. The sequence is that of Ribonuclease 3 from Bordetella bronchiseptica (strain ATCC BAA-588 / NCTC 13252 / RB50) (Alcaligenes bronchisepticus).